Here is a 375-residue protein sequence, read N- to C-terminus: Ornithine carbamoyltransferase, chloroplastic (375 aa).

Carbamoyl phosphate contacts are provided by residues 123-126, R174, H201, and Q204; that span reads SMRT. 4 residues coordinate L-ornithine: N232, D293, S297, and M298. Residue C333 is the Proton acceptor of the active site. Carbamoyl phosphate contacts are provided by residues 333–334 and R361; that span reads CL.

Belongs to the aspartate/ornithine carbamoyltransferase superfamily. OTCase family. Homotrimer.

Its subcellular location is the plastid. The protein resides in the chloroplast. The enzyme catalyses carbamoyl phosphate + L-ornithine = L-citrulline + phosphate + H(+). The polypeptide is Ornithine carbamoyltransferase, chloroplastic (ARGF) (Pisum sativum (Garden pea)).